Here is a 176-residue protein sequence, read N- to C-terminus: Isopentenyl-diphosphate Delta-isomerase (176 aa).

His-23 and His-29 together coordinate Mn(2+). Residues 27 to 161 (LRHLAISVFV…PERFTPWLKI (135 aa)) enclose the Nudix hydrolase domain. Cys-63 is a catalytic residue. Cys-63 contacts Mg(2+). Mn(2+) is bound at residue His-65. Position 83 (Glu-83) interacts with Mg(2+). 2 residues coordinate Mn(2+): Glu-109 and Glu-111. The active site involves Glu-111.

The protein belongs to the IPP isomerase type 1 family. The cofactor is Mg(2+). Requires Mn(2+) as cofactor.

Its subcellular location is the cytoplasm. The enzyme catalyses isopentenyl diphosphate = dimethylallyl diphosphate. It functions in the pathway isoprenoid biosynthesis; dimethylallyl diphosphate biosynthesis; dimethylallyl diphosphate from isopentenyl diphosphate: step 1/1. Its pathway is porphyrin-containing compound metabolism; chlorophyll biosynthesis. Functionally, catalyzes the 1,3-allylic rearrangement of the homoallylic substrate isopentenyl (IPP) to its highly electrophilic allylic isomer, dimethylallyl diphosphate (DMAPP). The protein is Isopentenyl-diphosphate Delta-isomerase of Rhodobacter capsulatus (strain ATCC BAA-309 / NBRC 16581 / SB1003).